Reading from the N-terminus, the 131-residue chain is Aspartate 1-decarboxylase (131 aa).

Catalysis depends on Ser-25, which acts as the Schiff-base intermediate with substrate; via pyruvic acid. The residue at position 25 (Ser-25) is a Pyruvic acid (Ser). Thr-57 serves as a coordination point for substrate. Tyr-58 serves as the catalytic Proton donor. Substrate is bound at residue 73-75; it reads GAA.

The protein belongs to the PanD family. As to quaternary structure, heterooctamer of four alpha and four beta subunits. It depends on pyruvate as a cofactor. Is synthesized initially as an inactive proenzyme, which is activated by self-cleavage at a specific serine bond to produce a beta-subunit with a hydroxyl group at its C-terminus and an alpha-subunit with a pyruvoyl group at its N-terminus.

The protein resides in the cytoplasm. The enzyme catalyses L-aspartate + H(+) = beta-alanine + CO2. The protein operates within cofactor biosynthesis; (R)-pantothenate biosynthesis; beta-alanine from L-aspartate: step 1/1. Catalyzes the pyruvoyl-dependent decarboxylation of aspartate to produce beta-alanine. In Anaeromyxobacter dehalogenans (strain 2CP-C), this protein is Aspartate 1-decarboxylase.